The chain runs to 406 residues: uncharacterized protein (406 aa).

This is an uncharacterized protein from Connochaetes taurinus (Blue wildebeest).